The primary structure comprises 369 residues: Ribonuclease D (369 aa).

The 3'-5' exonuclease domain maps to 4–168 (EIITTTAQLH…CLEKLQQQLE (165 aa)). An HRDC domain is found at 207–286 (DRQGLAIIKA…TQVISQDEST (80 aa)).

The protein belongs to the RNase D family. The cofactor is a divalent metal cation.

The protein localises to the cytoplasm. The enzyme catalyses Exonucleolytic cleavage that removes extra residues from the 3'-terminus of tRNA to produce 5'-mononucleotides.. In terms of biological role, exonuclease involved in the 3' processing of various precursor tRNAs. Initiates hydrolysis at the 3'-terminus of an RNA molecule and releases 5'-mononucleotides. The protein is Ribonuclease D of Psychromonas ingrahamii (strain DSM 17664 / CCUG 51855 / 37).